The sequence spans 384 residues: Acetylornithine aminotransferase (384 aa).

Pyridoxal 5'-phosphate contacts are provided by residues 94 to 95 and Phe-121; that span reads GT. Position 124 (Arg-124) interacts with N(2)-acetyl-L-ornithine. 206-209 is a pyridoxal 5'-phosphate binding site; that stretch reads DEVQ. At Lys-235 the chain carries N6-(pyridoxal phosphate)lysine. Ser-263 provides a ligand contact to N(2)-acetyl-L-ornithine. A pyridoxal 5'-phosphate-binding site is contributed by Thr-264.

Belongs to the class-III pyridoxal-phosphate-dependent aminotransferase family. ArgD subfamily. In terms of assembly, homodimer. Pyridoxal 5'-phosphate serves as cofactor.

It is found in the cytoplasm. It carries out the reaction N(2)-acetyl-L-ornithine + 2-oxoglutarate = N-acetyl-L-glutamate 5-semialdehyde + L-glutamate. It participates in amino-acid biosynthesis; L-arginine biosynthesis; N(2)-acetyl-L-ornithine from L-glutamate: step 4/4. The protein is Acetylornithine aminotransferase of Listeria innocua serovar 6a (strain ATCC BAA-680 / CLIP 11262).